The following is a 412-amino-acid chain: Probable cystathionine gamma-synthase 2 (412 aa).

Residues Tyr76, Arg78, Gly106, Met107, Tyr131, Ser226, and Thr228 each contribute to the pyridoxal 5'-phosphate site. Lys229 carries the N6-(pyridoxal phosphate)lysine modification.

It belongs to the trans-sulfuration enzymes family. It depends on pyridoxal 5'-phosphate as a cofactor.

The enzyme catalyses O-phospho-L-homoserine + L-cysteine = L,L-cystathionine + phosphate. It carries out the reaction O-succinyl-L-homoserine + L-cysteine = L,L-cystathionine + succinate + H(+). It functions in the pathway amino-acid biosynthesis; L-methionine biosynthesis via de novo pathway; L-cystathionine from O-succinyl-L-homoserine: step 1/1. Catalyzes the first committed step of methionine (Met) biosynthesis. Catalyzes the formation of L-cystathionine from homoserine esters and L-cysteine, via a gamma-replacement reaction. This is Probable cystathionine gamma-synthase 2 from Arabidopsis thaliana (Mouse-ear cress).